We begin with the raw amino-acid sequence, 162 residues long: Sec-independent protein translocase protein TatB (162 aa).

Residues 1–21 (MFDIGFLEIIVIMVIALIVIG) form a helical membrane-spanning segment. The segment at 86–162 (IQDEFGIDQE…ESTPESSNKS (77 aa)) is disordered. Residues 108–117 (FSGTQFNKAP) show a composition bias toward polar residues. A compositionally biased stretch (low complexity) spans 123-135 (PTTEESPSSTPET). Positions 147 to 162 (DVSAPSESTPESSNKS) are enriched in polar residues.

Belongs to the TatB family. The Tat system comprises two distinct complexes: a TatABC complex, containing multiple copies of TatA, TatB and TatC subunits, and a separate TatA complex, containing only TatA subunits. Substrates initially bind to the TatABC complex, which probably triggers association of the separate TatA complex to form the active translocon.

It is found in the cell inner membrane. Part of the twin-arginine translocation (Tat) system that transports large folded proteins containing a characteristic twin-arginine motif in their signal peptide across membranes. Together with TatC, TatB is part of a receptor directly interacting with Tat signal peptides. TatB may form an oligomeric binding site that transiently accommodates folded Tat precursor proteins before their translocation. In Hydrogenovibrio crunogenus (strain DSM 25203 / XCL-2) (Thiomicrospira crunogena), this protein is Sec-independent protein translocase protein TatB.